The sequence spans 597 residues: Aspartate--tRNA ligase (597 aa).

L-aspartate is bound at residue glutamate 180. The tract at residues 204 to 207 is aspartate; that stretch reads QLFK. Arginine 226 contacts L-aspartate. ATP is bound by residues 226–228 and glutamine 235; that span reads RDE. Histidine 454 contacts L-aspartate. Glutamate 488 lines the ATP pocket. Arginine 495 lines the L-aspartate pocket. 540–543 lines the ATP pocket; sequence GLDR.

Belongs to the class-II aminoacyl-tRNA synthetase family. Type 1 subfamily. In terms of assembly, homodimer.

The protein resides in the cytoplasm. It carries out the reaction tRNA(Asp) + L-aspartate + ATP = L-aspartyl-tRNA(Asp) + AMP + diphosphate. Functionally, catalyzes the attachment of L-aspartate to tRNA(Asp) in a two-step reaction: L-aspartate is first activated by ATP to form Asp-AMP and then transferred to the acceptor end of tRNA(Asp). This chain is Aspartate--tRNA ligase, found in Clostridium perfringens (strain SM101 / Type A).